The primary structure comprises 338 residues: Methionine import ATP-binding protein MetN (338 aa).

The region spanning 2-241 is the ABC transporter domain; sequence ISLDGIRKVF…PKEHITKEFV (240 aa). 38–45 serves as a coordination point for ATP; it reads GYSGAGKS.

Belongs to the ABC transporter superfamily. Methionine importer (TC 3.A.1.24) family. The complex is composed of two ATP-binding proteins (MetN), two transmembrane proteins (MetI) and a solute-binding protein (MetQ).

It localises to the cell membrane. It catalyses the reaction L-methionine(out) + ATP + H2O = L-methionine(in) + ADP + phosphate + H(+). The catalysed reaction is D-methionine(out) + ATP + H2O = D-methionine(in) + ADP + phosphate + H(+). Its function is as follows. Part of the ABC transporter complex MetNIQ involved in methionine import. Responsible for energy coupling to the transport system. In Halalkalibacterium halodurans (strain ATCC BAA-125 / DSM 18197 / FERM 7344 / JCM 9153 / C-125) (Bacillus halodurans), this protein is Methionine import ATP-binding protein MetN.